The following is a 34-amino-acid chain: Leader peptide SpeFL (34 aa).

A sensor domain region spans residues 1–13 (MENNSRTMPHIRR). Positions 10–16 (HIRRTTH) match the Ornithine recognition loop motif. An L-ornithine-binding site is contributed by R13. Positions 14-34 (TTHIMKFAHRNSFDFHFFNAR) are effector domain.

It belongs to the speF operon leader peptide family. As to quaternary structure, binds ornithine in stalled 70S ribosomes, blocking the upper two-thirds of the exit tunnel. Contacts 23S rRNA and ribosomal proteins L4 and L22.

Functionally, a small protein (arrest peptide) encoded upstream of inducible ornithine carboxylase gene (speF) that controls expression of downstream genes (speF and patE) by nascent chain-translational arrest and transcriptional attenuation. In the presence of ornithine a toeprint due to ribosomal arrest can be seen on the speFL transcript. Only L-ornithine (not other tested amino acids) has this effect. It is thought that in the presence of ornithine, ribosomal stalling on speFL prevents binding of Rho transcription termination factor to a downstream rut site allowing transcription of the operon. In the absence of ornithine, ribosomes terminate translation and are recycled, exposing the rut site allowing Rho to bind and prematurely terminate transcription. The presence of a pair of rare Arg codons could slow down translation to prevent polysome accumulation and to expose the rut site to Rho. The polypeptide is Leader peptide SpeFL (Escherichia coli (strain K12)).